The chain runs to 203 residues: Kunitz trypsin inhibitor 6 (203 aa).

A signal peptide spans 1 to 21; that stretch reads MKTFQLMMISFLFVAITTTSG. An intrachain disulfide couples Cys-70 to Cys-115. Residues Asn-94, Asn-127, Asn-136, Asn-144, and Asn-197 are each glycosylated (N-linked (GlcNAc...) asparagine).

Belongs to the protease inhibitor I3 (leguminous Kunitz-type inhibitor) family.

In terms of biological role, exhibits Kunitz trypsin protease inhibitor activity. This is Kunitz trypsin inhibitor 6 from Arabidopsis thaliana (Mouse-ear cress).